The sequence spans 108 residues: Insulin (108 aa).

Residues 1-23 (MALWILLPLLALLILWGPDPAQA) form the signal peptide. 2 disulfide bridges follow: Cys-30-Cys-94 and Cys-43-Cys-107. The propeptide at 57 to 88 (EVEDPQVGQVELGAGPGAGSEQTLALEVARQA) is c peptide.

This sequence belongs to the insulin family. As to quaternary structure, heterodimer of a B chain and an A chain linked by two disulfide bonds.

The protein localises to the secreted. In terms of biological role, insulin decreases blood glucose concentration. It increases cell permeability to monosaccharides, amino acids and fatty acids. It accelerates glycolysis, the pentose phosphate cycle, and glycogen synthesis in liver. This chain is Insulin (INS), found in Rodentia sp.